The sequence spans 310 residues: p-hydroxybenzoic acid efflux pump subunit AaeA (310 aa).

The helical transmembrane segment at 12 to 32 (AITVVLVVLAFIAIFRAWSFY) threads the bilayer.

It belongs to the membrane fusion protein (MFP) (TC 8.A.1) family.

The protein resides in the cell inner membrane. Functionally, forms an efflux pump with AaeB. In Cronobacter sakazakii (strain ATCC BAA-894) (Enterobacter sakazakii), this protein is p-hydroxybenzoic acid efflux pump subunit AaeA.